Here is a 305-residue protein sequence, read N- to C-terminus: CRISPR-associated endonuclease Cas1 (305 aa).

The segment at 96–278 (SDKLLYQAKL…EDVLAAGEIQ (183 aa)) is sufficient for cleavage of ssRNA, ssDNA and Holliday junction DNA. 3 residues coordinate Mg(2+): glutamate 141, histidine 208, and aspartate 221. Residues 278–305 (QPPAPPEDAQPVAIPLPVSLGDAGHRSS) are disordered.

It belongs to the CRISPR-associated endonuclease Cas1 family. Homodimer. Part of the Cas1-Cas2 complex. Interacts with RecB, RecC, RuvB, CasC and CasE. Forms a hexamer with 2 Cas1 dimers sandwiching a Cas2 dimer. The DNA lies across a flat surface extending from 1 Cas1 dimer, across the Cas2 dimer and contacting the other Cas1 dimer. Only 1 Cas1 protein from each dimer is catalytic, the other interacts with the Cas2 dimer and possibly target DNA. Requires Mg(2+) as cofactor.

Its subcellular location is the cytoplasm. With respect to regulation, nuclease activity partially inhibited by CasE. CRISPR (clustered regularly interspaced short palindromic repeat), is an adaptive immune system that provides protection against mobile genetic elements (viruses, transposable elements and conjugative plasmids). CRISPR clusters contain sequences complementary to antecedent mobile elements and target invading nucleic acids. CRISPR clusters are transcribed and processed into CRISPR RNA (crRNA). The Cas1-Cas2 complex is involved in CRISPR adaptation, the first stage of CRISPR immunity, being required for the addition/removal of CRISPR spacers at the leader end of the CRISPR locus. The Cas1-Cas2 complex introduces staggered nicks into both strands of the CRISPR array near the leader repeat and joins the 5'-ends of the repeat strands with the 3'-ends of the new spacer sequence. Spacer DNA integration requires supercoiled target DNA and 3'-OH ends on the inserted (spacer) DNA and probably initiates with a nucleophilic attack of the C 3'-OH end of the protospacer on the minus strand of the first repeat sequence. Expression of Cas1-Cas2 in a strain lacking both genes permits spacer acquisition. Non-specifically binds DNA; the Cas1-Cas2 complex preferentially binds CRISPR-locus DNA. Highest binding is seen to a dual forked DNA complex with 3'-overhangs and a protospacer-adjacent motif-complement specifically positioned. The protospacer DNA lies across a flat surface extending from 1 Cas1 dimer, across the Cas2 dimer and contacting the other Cas1 dimer; the 23 bp-long ds section of the DNA is bracketed by 1 Tyr-22 from each of the Cas1 dimers. Cas1 cuts within the 3'-overhang, to generate a 33-nucleotide DNA that is probably incorporated into the CRISPR leader by a cut-and-paste mechanism. Cas1 alone endonucleolytically cleaves linear ssRNA, ssDNA and short (34 base) dsDNA as well as branched DNA substrates such as Holliday junctions, replication forks and 5'-flap DNA substrates. In vitro catalyzes a concerted transesterification reaction on branched DNA, as would be expected during integration of protospacers into the CRISPR leader sequence; Cas2 is not required in vitro. This reaction requires a 3'-OH group at the branch point. Genetic interactions suggest Cas1 interacts with components of the RecBC and RuvB DNA repair systems. This Escherichia coli (strain K12) protein is CRISPR-associated endonuclease Cas1 (ygbT).